Consider the following 92-residue polypeptide: Cell division protein FtsB (92 aa).

Topologically, residues 1-3 are cytoplasmic; sequence MRL. A helical membrane pass occupies residues 4-21; the sequence is FVFFMLCLLVLLQYHLWF. Topologically, residues 22 to 92 are periplasmic; sequence GKNGLGDRHN…TFFRIVPKED (71 aa). Residues 28 to 62 adopt a coiled-coil conformation; it reads DRHNLQEEVTLILENNSELRQRNQMMFSEIKDLKE.

The protein belongs to the FtsB family. Part of a complex composed of FtsB, FtsL and FtsQ.

It localises to the cell inner membrane. Essential cell division protein. May link together the upstream cell division proteins, which are predominantly cytoplasmic, with the downstream cell division proteins, which are predominantly periplasmic. This Psychromonas ingrahamii (strain DSM 17664 / CCUG 51855 / 37) protein is Cell division protein FtsB.